A 77-amino-acid chain; its full sequence is NAD(P)H-quinone oxidoreductase subunit L (77 aa).

A run of 2 helical transmembrane segments spans residues 12 to 32 and 47 to 67; these read LVAY…ILFY and LIVY…SPFL.

The protein belongs to the complex I NdhL subunit family. NDH-1 can be composed of about 15 different subunits; different subcomplexes with different compositions have been identified which probably have different functions.

The protein resides in the cellular thylakoid membrane. It catalyses the reaction a plastoquinone + NADH + (n+1) H(+)(in) = a plastoquinol + NAD(+) + n H(+)(out). The catalysed reaction is a plastoquinone + NADPH + (n+1) H(+)(in) = a plastoquinol + NADP(+) + n H(+)(out). NDH-1 shuttles electrons from an unknown electron donor, via FMN and iron-sulfur (Fe-S) centers, to quinones in the respiratory and/or the photosynthetic chain. The immediate electron acceptor for the enzyme in this species is believed to be plastoquinone. Couples the redox reaction to proton translocation, and thus conserves the redox energy in a proton gradient. Cyanobacterial NDH-1 also plays a role in inorganic carbon-concentration. The protein is NAD(P)H-quinone oxidoreductase subunit L of Prochlorococcus marinus subsp. pastoris (strain CCMP1986 / NIES-2087 / MED4).